The primary structure comprises 371 residues: Cytochrome b (371 aa).

The next 4 helical transmembrane spans lie at 25–45 (FGSM…FLAV), 69–90 (WMMQ…YIHI), 105–125 (WLSG…GYVL), and 170–190 (FFAL…LHIM). H75 and H89 together coordinate heme b. Heme b contacts are provided by H174 and H188. H193 is an a ubiquinone binding site. The next 4 membrane-spanning stretches (helical) occupy residues 218–238 (YKDL…VSFL), 280–300 (LWGA…PFTH), 312–332 (IMQL…WAAT), and 339–358 (FTMI…IMNP).

Belongs to the cytochrome b family. The cytochrome bc1 complex contains 3 respiratory subunits (MT-CYB, CYC1 and UQCRFS1), 2 core proteins (UQCRC1 and UQCRC2) and probably 6 low-molecular weight proteins. Heme b is required as a cofactor.

The protein localises to the mitochondrion inner membrane. Functionally, component of the ubiquinol-cytochrome c reductase complex (complex III or cytochrome b-c1 complex) that is part of the mitochondrial respiratory chain. The b-c1 complex mediates electron transfer from ubiquinol to cytochrome c. Contributes to the generation of a proton gradient across the mitochondrial membrane that is then used for ATP synthesis. The protein is Cytochrome b (MT-CYB) of Eryx miliaris nogaiorum (Black sand boa).